A 110-amino-acid polypeptide reads, in one-letter code: SOSS complex subunit C (110 aa).

It belongs to the SOSS-C family. As to quaternary structure, belongs to the multiprotein complex Integrator. Component of the SOSS complex, composed of soss-b (soss-b1/nabp2 or soss-b2/nabp1), soss-a/ints3 and soss-c/inip.

The protein localises to the nucleus. Its function is as follows. Component of the SOSS complex, a multiprotein complex that functions downstream of the MRN complex to promote DNA repair and G2/M checkpoint. The SOSS complex associates with single-stranded DNA at DNA lesions and influences diverse endpoints in the cellular DNA damage response including cell-cycle checkpoint activation, recombinational repair and maintenance of genomic stability. Required for efficient homologous recombination-dependent repair of double-strand breaks (DSBs). This is SOSS complex subunit C (inip) from Xenopus laevis (African clawed frog).